The chain runs to 355 residues: Chorismate synthase (355 aa).

An NADP(+)-binding site is contributed by Arg48. Residues 126–128 (RSS), Gly278, 293–297 (KPIPS), and Arg319 each bind FMN.

This sequence belongs to the chorismate synthase family. As to quaternary structure, homotetramer. It depends on FMNH2 as a cofactor.

It catalyses the reaction 5-O-(1-carboxyvinyl)-3-phosphoshikimate = chorismate + phosphate. It participates in metabolic intermediate biosynthesis; chorismate biosynthesis; chorismate from D-erythrose 4-phosphate and phosphoenolpyruvate: step 7/7. Catalyzes the anti-1,4-elimination of the C-3 phosphate and the C-6 proR hydrogen from 5-enolpyruvylshikimate-3-phosphate (EPSP) to yield chorismate, which is the branch point compound that serves as the starting substrate for the three terminal pathways of aromatic amino acid biosynthesis. This reaction introduces a second double bond into the aromatic ring system. This is Chorismate synthase from Oleidesulfovibrio alaskensis (strain ATCC BAA-1058 / DSM 17464 / G20) (Desulfovibrio alaskensis).